The following is a 533-amino-acid chain: Protein mono-ADP-ribosyltransferase PARP3 (533 aa).

The tract at residues 1–30 (MAPKRKASVQTEGSKKRRQGTEEEDSFRST) is disordered. Lysine 6 is modified (N6-(ADP-ribosyl)lysine). ADP-ribosyl glutamic acid is present on glutamate 12. The short motif at 14 to 18 (SKKRR) is the Nuclear localization signal element. An ADP-ribosyl glutamic acid mark is found at glutamate 24 and glutamate 32. The WGR domain maps to 57–147 (GIQVHEDYDC…DRFVAQPNKY (91 aa)). An ADP-ribosyl aspartic acid modification is found at aspartate 138. 4 positions are modified to ADP-ribosyl glutamic acid: glutamate 160, glutamate 230, glutamate 309, and glutamate 310. Positions 181–299 (PCSLDPATQN…DIELAQTLQA (119 aa)) constitute a PARP alpha-helical domain. In terms of domain architecture, PARP catalytic spans 313 to 533 (HPLDRDYQLL…RLRYLLEIHL (221 aa)).

It belongs to the ARTD/PARP family. Interacts with PARP1; leading to activate PARP1 in absence of DNA. Interacts with PRKDC. Interacts with XRCC5/Ku80; the interaction is dependent on nucleic acids. Interacts with XRCC6/Ku70; the interaction is dependent on nucleic acids. Interacts with EZH2, HDAC1, HDAC2, SUZ12, YY1, LRIG3 and LIG4. In terms of processing, auto-ADP-ribosylated.

The protein resides in the nucleus. The protein localises to the chromosome. Its subcellular location is the cytoplasm. It localises to the cytoskeleton. It is found in the microtubule organizing center. The protein resides in the centrosome. The protein localises to the centriole. It catalyses the reaction L-aspartyl-[protein] + NAD(+) = 4-O-(ADP-D-ribosyl)-L-aspartyl-[protein] + nicotinamide. The enzyme catalyses L-glutamyl-[protein] + NAD(+) = 5-O-(ADP-D-ribosyl)-L-glutamyl-[protein] + nicotinamide. It carries out the reaction L-lysyl-[protein] + NAD(+) = N(6)-(ADP-D-ribosyl)-L-lysyl-[protein] + nicotinamide + H(+). Mono-ADP-ribosyltransferase that mediates mono-ADP-ribosylation of target proteins and plays a key role in the response to DNA damage. Mediates mono-ADP-ribosylation of glutamate, aspartate or lysine residues on target proteins. In contrast to PARP1 and PARP2, it is not able to mediate poly-ADP-ribosylation. Involved in DNA repair by mediating mono-ADP-ribosylation of a limited number of acceptor proteins involved in chromatin architecture and in DNA metabolism, such as histone H2B, XRCC5 and XRCC6. ADP-ribosylation follows DNA damage and appears as an obligatory step in a detection/signaling pathway leading to the reparation of DNA strand breaks. Involved in single-strand break repair by catalyzing mono-ADP-ribosylation of histone H2B on 'Glu-2' (H2BE2ADPr) of nucleosomes containing nicked DNA. Cooperates with the XRCC5-XRCC6 (Ku80-Ku70) heterodimer to limit end-resection thereby promoting accurate NHEJ. Suppresses G-quadruplex (G4) structures in response to DNA damage. Associates with a number of DNA repair factors and is involved in the response to exogenous and endogenous DNA strand breaks. Together with APLF, promotes the retention of the LIG4-XRCC4 complex on chromatin and accelerate DNA ligation during non-homologous end-joining (NHEJ). May link the DNA damage surveillance network to the mitotic fidelity checkpoint. Acts as a negative regulator of immunoglobulin class switch recombination, probably by controlling the level of AICDA /AID on the chromatin. In addition to proteins, also able to ADP-ribosylate DNA: mediates DNA mono-ADP-ribosylation of DNA strand break termini via covalent addition of a single ADP-ribose moiety to a 5'- or 3'-terminal phosphate residues in DNA containing multiple strand breaks. The protein is Protein mono-ADP-ribosyltransferase PARP3 of Mus musculus (Mouse).